We begin with the raw amino-acid sequence, 131 residues long: Large-conductance mechanosensitive channel (131 aa).

2 helical membrane passes run 14-34 (VMDMAVGIIIGAAFTAIVTSL) and 71-91 (GNFIMAVINFLIIAWVVFLLV).

This sequence belongs to the MscL family. Homopentamer.

It is found in the cell inner membrane. In terms of biological role, channel that opens in response to stretch forces in the membrane lipid bilayer. May participate in the regulation of osmotic pressure changes within the cell. The polypeptide is Large-conductance mechanosensitive channel (Dinoroseobacter shibae (strain DSM 16493 / NCIMB 14021 / DFL 12)).